The sequence spans 545 residues: Dual specificity calcium/calmodulin-dependent 3',5'-cyclic nucleotide phosphodiesterase 1A (545 aa).

Calmodulin-binding regions lie at residues 24-44 (TEKM…QLEK) and 114-137 (EKPK…MYRK). The PDEase domain occupies 142–522 (VGLTYPAAVI…ERWKELAAQG (381 aa)). Residue H219 is the Proton donor of the active site. Zn(2+) is bound by residues H223, H259, D260, and D366. D260 is a Mg(2+) binding site. The interval 526 to 545 (LHKNSEELGNTEEKHADTRP) is disordered.

This sequence belongs to the cyclic nucleotide phosphodiesterase family. PDE1 subfamily. As to quaternary structure, homodimer. Interacts with YWHAZ. Zn(2+) is required as a cofactor. It depends on Mg(2+) as a cofactor. Expressed in brain, kidney and testis.

The protein resides in the cell projection. Its subcellular location is the cilium. It localises to the flagellum. It catalyses the reaction a nucleoside 3',5'-cyclic phosphate + H2O = a nucleoside 5'-phosphate + H(+). The enzyme catalyses 3',5'-cyclic GMP + H2O = GMP + H(+). It carries out the reaction 3',5'-cyclic AMP + H2O = AMP + H(+). Type I PDE are activated by the binding of calmodulin in the presence of Ca(2+). With respect to regulation, activated by the binding of calmodulin in the presence of Ca(2+). Calcium/calmodulin-dependent cyclic nucleotide phosphodiesterase with a dual specificity for the second messengers cGMP and cAMP, which are key regulators of many important physiological processes. Has a higher efficiency with cGMP compared to cAMP. This Mus musculus (Mouse) protein is Dual specificity calcium/calmodulin-dependent 3',5'-cyclic nucleotide phosphodiesterase 1A.